The chain runs to 378 residues: Ferredoxin--NADP reductase, root isozyme 1, chloroplastic (378 aa).

The transit peptide at 1–65 directs the protein to the chloroplast; the sequence is MALSTTPSQM…KRSTICMSLQ (65 aa). An FAD-binding FR-type domain is found at 93–221; that stretch reads KEPYTATIVS…TGPSGKVMLL (129 aa). A disulfide bond links Cys196 and Cys201. The residue at position 197 (Ser197) is a Phosphoserine. Thr229 is modified (phosphothreonine). 231–249 contributes to the NADP(+) binding site; the sequence is IMIATGTGVAPYRGYLRRM. Positions 349 to 373 form a coiled coil; sequence LKRVAEERGESWEQKLTQLRKNKQW.

Belongs to the ferredoxin--NADP reductase type 1 family. The cofactor is FAD. As to expression, expressed in shoots and roots. Less abundant in roots than RFNR2.

Its subcellular location is the plastid. It localises to the chloroplast. The catalysed reaction is 2 reduced [2Fe-2S]-[ferredoxin] + NADP(+) + H(+) = 2 oxidized [2Fe-2S]-[ferredoxin] + NADPH. Maintains the supply of reduced ferredoxin under non-photosynthetic conditions. The polypeptide is Ferredoxin--NADP reductase, root isozyme 1, chloroplastic (RFNR1) (Arabidopsis thaliana (Mouse-ear cress)).